The sequence spans 224 residues: MPHKIEGFFLLLLFGYEATLGLSSTEDEGEDPWYQKACKCDCQVGANALWSAGATSLDCIPECPYHKPLGFESGEVTPDQITCSNPEQYVGWYSSWTANKARLNSQGFGCAWLSKYQDSSQWLQIDLKEIKVISGILTQGRCDIDEWVTKYSVQYRTDERLNWIYYKDQTGNNRVFYGNSDRSSTVQNLLRPPIISRFIRLIPLGWHVRIAIRMELLECASKCA.

A signal peptide spans 1–23 (MPHKIEGFFLLLLFGYEATLGLS). In terms of domain architecture, F5/8 type C spans 63 to 219 (CPYHKPLGFE…IAIRMELLEC (157 aa)). 2 cysteine pairs are disulfide-bonded: Cys63–Cys219 and Cys110–Cys142.

Homooctamer of 4 homodimers; disulfide-linked. The homooctamer has a flat, cogwheel structure with a diameter of about 14 nm. Two stacked octamers can assemble to form a hexadecamer. Detected in the eye cup. Detected in retina, in the inner segment of the photoreceptors, the inner nuclear layer, the inner plexiform layer and the ganglion cell layer (at protein level). Restricted to the retina. At the mRNA level, detected only within the photoreceptor cell layer, most prominently within the inner segments of the photoreceptors. Undetectable in the inner plexiform layers and the inner nuclear layer.

It is found in the secreted. Its subcellular location is the cell membrane. In terms of biological role, binds negatively charged membrane lipids, such as phosphatidylserine and phosphoinositides. May play a role in cell-cell adhesion processes in the retina, via homomeric interaction between octamers present on the surface of two neighboring cells. Required for normal structure and function of the retina. The sequence is that of Retinoschisin (Rs1) from Mus musculus (Mouse).